The following is a 104-amino-acid chain: Small ribosomal subunit protein uS10 (104 aa).

It belongs to the universal ribosomal protein uS10 family. Part of the 30S ribosomal subunit.

Functionally, involved in the binding of tRNA to the ribosomes. The polypeptide is Small ribosomal subunit protein uS10 (Ralstonia nicotianae (strain ATCC BAA-1114 / GMI1000) (Ralstonia solanacearum)).